The primary structure comprises 1311 residues: Nephrocystin-3 (1311 aa).

The stretch at 81–183 (SKNNEIASMQ…LQRLQAQGIQ (103 aa)) forms a coiled coil. 9 TPR repeats span residues 889–923 (LSYWQLVGKDKISMASEYFDALKQYERSCEGEEKM), 927–960 (ADLYETLGRFLKDLGLLSQAVTPLQRSLEIRETA), 969–1002 (AQSLHQLAGVYVQSKKFGNAEQLYKQALEISENA), 1011–1044 (ARELDALAVLYQKQNKFEQAEQLRKKSLKIRQKS), 1077–1110 (ARTLNELGVLYYLQNNLETAETFLKRSLEMRERV), 1119–1152 (AQSINNLAALYNEKKQYDKAEELYERALDIRRRA), 1161–1194 (AYTVKHLAVLYKRKGKLDKAVPLYELAVEIRQKS), 1203–1236 (ATALVNLAVLYCQMKKQAEASPLYERAMKIYEDS), and 1245–1278 (GETLKNLAVLRYEEGDFEKAAELYKRAMEIKETE).

Its subcellular location is the cell projection. It is found in the cilium. Required for normal ciliary development and function. Inhibits disheveled-1-induced canonical Wnt-signaling activity and may also play a role in the control of non-canonical Wnt signaling that regulates planar cell polarity. Probably acts as a molecular switch between different Wnt signaling pathways. Required for proper convergent extension cell movements. In Xenopus tropicalis (Western clawed frog), this protein is Nephrocystin-3 (nphp3).